A 308-amino-acid chain; its full sequence is tRNA dimethylallyltransferase 2 (308 aa).

13–20 (GPTASGKT) lines the ATP pocket. 15–20 (TASGKT) contacts substrate. The interaction with substrate tRNA stretch occupies residues 38 to 41 (DSRQ).

Belongs to the IPP transferase family. As to quaternary structure, monomer. Mg(2+) is required as a cofactor.

It catalyses the reaction adenosine(37) in tRNA + dimethylallyl diphosphate = N(6)-dimethylallyladenosine(37) in tRNA + diphosphate. In terms of biological role, catalyzes the transfer of a dimethylallyl group onto the adenine at position 37 in tRNAs that read codons beginning with uridine, leading to the formation of N6-(dimethylallyl)adenosine (i(6)A). This Bacteroides fragilis (strain YCH46) protein is tRNA dimethylallyltransferase 2.